We begin with the raw amino-acid sequence, 902 residues long: 4-hydroxyphenylacetate decarboxylase glycyl radical subunit (902 aa).

The PFL domain maps to 38–774 (KRAEDLLDVY…ATLATPDGRL (737 aa)). Positions 348 and 507 each coordinate 4-hydroxyphenylacetate. Cys507 (cysteine radical intermediate) is an active-site residue. Glu509 acts as the Proton donor in catalysis. His540 and Glu641 together coordinate 4-hydroxyphenylacetate. Residues 782 to 902 (GSVSAYAGTD…VIARTEYEGV (121 aa)) form the Glycine radical domain. Position 877 is a glycine radical (Gly877).

It belongs to the glycyl radical enzyme (GRE) family. HPAD subfamily. As to quaternary structure, heterooctamer consisting of 4 large (HpdB) subunits and 4 small (HpdC) subunits, arranged as a tetramer of heterodimers. Also forms a catalytically inactive homodimer. Requires the activating protein CsdA to generate the key active site glycyl radical that is involved in catalysis. In terms of processing, phosphorylated on serine. Phosphorylation may trigger the formation of the active heterooctamers and thereby regulates enzyme activity.

The enzyme catalyses 4-hydroxyphenylacetate + H(+) = 4-methylphenol + CO2. It carries out the reaction 3,4-dihydroxyphenylacetate + H(+) = 4-methylcatechol + CO2. Its function is as follows. Glycyl radical subunit of the HPA decarboxylase that decarboxylates phenylacetates with a hydroxyl group in the p-position. Active toward 4-hydroxyphenylacetate and 3,4-dihydroxyphenylacetate, forming 4-methylphenol and 4-methylcatechol, respectively. Is likely involved in the catabolism of aromatic amino acids such as tyrosine fermentation. 4-methylphenol (p-cresol) formation provides metabolic toxicity, which allows an active suppression of other microbes and may provide growth advantages for the producers in highly competitive environments. The large subunit is the catalytic subunit that binds the substrate. In Clostridioides difficile (strain 630) (Peptoclostridium difficile), this protein is 4-hydroxyphenylacetate decarboxylase glycyl radical subunit.